A 244-amino-acid polypeptide reads, in one-letter code: Cobalt transport protein CbiM (244 aa).

The first 27 residues, 1–27 (MVEGMLKTNFRLLFLLIFLLIPTPVLA), serve as a signal peptide directing secretion. Helical transmembrane passes span 36 to 56 (PVKWVIFWDLVTLPFIMVGFI), 65 to 85 (GPGAKLMLAFAGAFIFVLSAL), 102 to 122 (LAAILFGPFITTVLGFIVLIF), 134 to 154 (TLGANTFSMAVAGPLVAYGVY), 168 to 188 (IFLAAMLGDLVTYIVTSVQLA), and 196 to 216 (LFLSALKFMGIFALTQIPLAI).

This sequence belongs to the CbiM family. Forms an energy-coupling factor (ECF) transporter complex composed of an ATP-binding protein (A component, CbiO), a transmembrane protein (T component, CbiQ) and 2 possible substrate-capture proteins (S components, CbiM and CbiN) of unknown stoichimetry.

It localises to the cell membrane. The protein operates within cofactor biosynthesis; adenosylcobalamin biosynthesis. Its function is as follows. Part of the energy-coupling factor (ECF) transporter complex CbiMNOQ involved in cobalt import. In Carboxydothermus hydrogenoformans (strain ATCC BAA-161 / DSM 6008 / Z-2901), this protein is Cobalt transport protein CbiM.